Here is a 610-residue protein sequence, read N- to C-terminus: UvrABC system protein C (610 aa).

In terms of domain architecture, GIY-YIG spans 16-94; sequence SQPGVYRMYD…IKLYQPRYNV (79 aa). In terms of domain architecture, UVR spans 204-239; it reads DQVLTQLIARMEKASQSLEFEEAARIRDQIQAVRRV. A disordered region spans residues 540-559; that stretch reads HAISGHRKKRAKVKSTSSLE. Over residues 543–552 the composition is skewed to basic residues; that stretch reads SGHRKKRAKV.

Belongs to the UvrC family. As to quaternary structure, interacts with UvrB in an incision complex.

Its subcellular location is the cytoplasm. The UvrABC repair system catalyzes the recognition and processing of DNA lesions. UvrC both incises the 5' and 3' sides of the lesion. The N-terminal half is responsible for the 3' incision and the C-terminal half is responsible for the 5' incision. The sequence is that of UvrABC system protein C from Klebsiella pneumoniae (strain 342).